A 175-amino-acid chain; its full sequence is Large ribosomal subunit protein uL6 (175 aa).

The protein belongs to the universal ribosomal protein uL6 family. Part of the 50S ribosomal subunit.

Its function is as follows. This protein binds to the 23S rRNA, and is important in its secondary structure. It is located near the subunit interface in the base of the L7/L12 stalk, and near the tRNA binding site of the peptidyltransferase center. This Xanthomonas campestris pv. campestris (strain 8004) protein is Large ribosomal subunit protein uL6.